The chain runs to 294 residues: Nucleotide-binding protein Reut_A0350 (294 aa).

8-15 (GISGSGKS) contributes to the ATP binding site. 57–60 (DIRS) contributes to the GTP binding site.

It belongs to the RapZ-like family.

Functionally, displays ATPase and GTPase activities. The polypeptide is Nucleotide-binding protein Reut_A0350 (Cupriavidus pinatubonensis (strain JMP 134 / LMG 1197) (Cupriavidus necator (strain JMP 134))).